We begin with the raw amino-acid sequence, 592 residues long: Aspartate--tRNA ligase (592 aa).

Residue glutamate 171 coordinates L-aspartate. The tract at residues 195–198 (QLFK) is aspartate. Arginine 217 is a binding site for L-aspartate. ATP is bound by residues 217 to 219 (RDE) and glutamine 226. Position 448 (histidine 448) interacts with L-aspartate. Position 482 (glutamate 482) interacts with ATP. Arginine 489 is a binding site for L-aspartate. 534–537 (GLDR) provides a ligand contact to ATP.

Belongs to the class-II aminoacyl-tRNA synthetase family. Type 1 subfamily. Homodimer.

The protein resides in the cytoplasm. It carries out the reaction tRNA(Asp) + L-aspartate + ATP = L-aspartyl-tRNA(Asp) + AMP + diphosphate. Its function is as follows. Catalyzes the attachment of L-aspartate to tRNA(Asp) in a two-step reaction: L-aspartate is first activated by ATP to form Asp-AMP and then transferred to the acceptor end of tRNA(Asp). The sequence is that of Aspartate--tRNA ligase from Vibrio parahaemolyticus serotype O3:K6 (strain RIMD 2210633).